The chain runs to 457 residues: tRNA modification GTPase MnmE (457 aa).

Residues Arg-25, Glu-87, and Arg-126 each coordinate (6S)-5-formyl-5,6,7,8-tetrahydrofolate. In terms of domain architecture, TrmE-type G spans 223–377 (GISTAIIGRP…IEERINQLFF (155 aa)). Asn-233 contacts K(+). Residues 233–238 (NVGKSS), 252–258 (TDIEGTT), and 277–280 (DTAG) each bind GTP. Ser-237 contributes to the Mg(2+) binding site. Residues Thr-252, Ile-254, and Thr-257 each contribute to the K(+) site. Thr-258 contributes to the Mg(2+) binding site. Residue Lys-457 coordinates (6S)-5-formyl-5,6,7,8-tetrahydrofolate.

Belongs to the TRAFAC class TrmE-Era-EngA-EngB-Septin-like GTPase superfamily. TrmE GTPase family. In terms of assembly, homodimer. Heterotetramer of two MnmE and two MnmG subunits. The cofactor is K(+).

It is found in the cytoplasm. Its function is as follows. Exhibits a very high intrinsic GTPase hydrolysis rate. Involved in the addition of a carboxymethylaminomethyl (cmnm) group at the wobble position (U34) of certain tRNAs, forming tRNA-cmnm(5)s(2)U34. The sequence is that of tRNA modification GTPase MnmE from Streptococcus sanguinis (strain SK36).